A 440-amino-acid chain; its full sequence is Probable secretory pathway GDP dissociation inhibitor 1 (440 aa).

It belongs to the Rab GDI family.

This chain is Probable secretory pathway GDP dissociation inhibitor 1 (gdi1), found in Schizosaccharomyces pombe (strain 972 / ATCC 24843) (Fission yeast).